Reading from the N-terminus, the 256-residue chain is MASGTTIQPSRPSLTSNDSAVLQALFDAESSPSSAVAIDPSLSPFPEYLHISASDHESLKARELSIIRSLQSDDVSMDTITSAIRDLDALITEHPTYPSAYVNRAQALRLHIEKTAEASTDPEEAIFTPGNTESASRLFSDLGQAISLCTPRSPADPVSTVQARILADSHTHRGYLLLKAARLKKNANGNEMVGGPDKLRDMGPDQLEEMASRDFFFGGRYGNKVAQQLAVQTNPYAKMCGAIVKEALRKEVEGVI.

Belongs to the TTC36 family.

It is found in the cytoplasm. Its function is as follows. Part of the L-tyrosine degradation gene cluster that mediates the biosynthesis of the brownish pigment pyomelanin as an alternative melanin. The 4-hydroxyphenylpyruvate dioxygenase hppD catalyzes the conversion of 4-hydroxyphenylpyruvate to homogentisic acid (HGA). The protein hmgX is crucial for this conversion and thus, probably functions as an accessory factor to mediate specific activity of hppD. The homogentisate 1,2-dioxygenase hmgA is then involved in the cleavage of the aromatic ring of HGA and its conversion to 4-maleylacetoacetate. When hmgA activity is lowered by the cell wall integrity (CWI) signaling pathway, HGA accumulates and leads to the production of pyomelanin through benzoquinone acetic acid after oxidation and polymerization. On the opposite, in non-stress conditions, both hppD and hmgA activities are balanced and HGA is degraded into 4-maleylacetoacetate. 4-maleylacetoacetate is further converted to 4-fumarylacetoacetate by the maleylacetoacetate isomerase maiA, which is degraded into fumarate and acetoacetate by the fumarylacetoacetase fahA. This Aspergillus fumigatus (strain ATCC MYA-4609 / CBS 101355 / FGSC A1100 / Af293) (Neosartorya fumigata) protein is L-tyrosine degradation gene cluster protein hmgX.